Consider the following 390-residue polypeptide: Protein AC109 (390 aa).

It is found in the host cytoplasm. It localises to the host nucleus. Functionally, plays a role in the transport of the budded virion (BV) to the host nucleus and for occlusion of viral progeny. The protein is Protein AC109 (ORF109) of Lepidoptera (butterflies and moths).